The primary structure comprises 1394 residues: DNA-directed RNA polymerase subunit beta' (1394 aa).

4 residues coordinate Zn(2+): Cys71, Cys73, Cys86, and Cys89. Residues Asp462, Asp464, and Asp466 each coordinate Mg(2+). Positions 810, 883, 890, and 893 each coordinate Zn(2+).

Belongs to the RNA polymerase beta' chain family. In terms of assembly, the RNAP catalytic core consists of 2 alpha, 1 beta, 1 beta' and 1 omega subunit. When a sigma factor is associated with the core the holoenzyme is formed, which can initiate transcription. It depends on Mg(2+) as a cofactor. Zn(2+) is required as a cofactor.

It catalyses the reaction RNA(n) + a ribonucleoside 5'-triphosphate = RNA(n+1) + diphosphate. Its function is as follows. DNA-dependent RNA polymerase catalyzes the transcription of DNA into RNA using the four ribonucleoside triphosphates as substrates. This chain is DNA-directed RNA polymerase subunit beta', found in Beijerinckia indica subsp. indica (strain ATCC 9039 / DSM 1715 / NCIMB 8712).